We begin with the raw amino-acid sequence, 423 residues long: Sorting nexin-4 (423 aa).

Residues 1–21 (MTDKGKNDLTSKAKDKARGNP) show a composition bias toward basic and acidic residues. The segment at 1-25 (MTDKGKNDLTSKAKDKARGNPEKPP) is disordered. In terms of domain architecture, PX spans 29-157 (EIIVSDPQKR…TFLVSKDWES (129 aa)). The a 1,2-diacyl-sn-glycero-3-phospho-(1D-myo-inositol-3-phosphate) site is built by R78, S80, K104, and R123. Coiled coils occupy residues 217–252 (KKND…AKLK) and 346–381 (SRRE…ECLK).

It belongs to the sorting nexin family. In terms of assembly, forms a complex with ATG20 and ATG17. Binds also to SNC1 and SNX41.

The protein localises to the cytoplasm. Its subcellular location is the cytosol. It localises to the preautophagosomal structure membrane. The protein resides in the endosome membrane. In terms of biological role, sorting nexin, involved in the separation or division of vacuoles throughout the entire life cycle of the cells. Involved in retrieval of late-Golgi SNAREs from post-Golgi endosomes to the trans-Golgi network, for cytoplasm to vacuole transport (Cvt), and autophagy of large cargos including mitophagy, pexophagy and glycophagy. Involved in proper sorting of the v-SNARE protein SNC1. The protein is Sorting nexin-4 of Saccharomyces cerevisiae (strain ATCC 204508 / S288c) (Baker's yeast).